The following is a 334-amino-acid chain: N-acetyl-gamma-glutamyl-phosphate reductase (334 aa).

Cysteine 154 is an active-site residue.

This sequence belongs to the NAGSA dehydrogenase family. Type 1 subfamily.

It is found in the cytoplasm. The enzyme catalyses N-acetyl-L-glutamate 5-semialdehyde + phosphate + NADP(+) = N-acetyl-L-glutamyl 5-phosphate + NADPH + H(+). Its pathway is amino-acid biosynthesis; L-arginine biosynthesis; N(2)-acetyl-L-ornithine from L-glutamate: step 3/4. In terms of biological role, catalyzes the NADPH-dependent reduction of N-acetyl-5-glutamyl phosphate to yield N-acetyl-L-glutamate 5-semialdehyde. This chain is N-acetyl-gamma-glutamyl-phosphate reductase, found in Vibrio vulnificus (strain YJ016).